Here is a 304-residue protein sequence, read N- to C-terminus: uncharacterized protein (304 aa).

Residues Thr-58 and Tyr-121 each act as charge relay system in the active site. The Proton donor role is filled by Tyr-147. Lys-175 (schiff-base intermediate with substrate) is an active-site residue.

The protein belongs to the DapA family. In terms of assembly, homotetramer.

It localises to the cytoplasm. This is an uncharacterized protein from Halobacterium salinarum (strain ATCC 29341 / DSM 671 / R1).